Here is a 53-residue protein sequence, read N- to C-terminus: Putative defensin-like protein 53 (53 aa).

4 disulfide bridges follow: C12-C51, C16-C40, C26-C49, and C30-C50.

The protein belongs to the DEFL family.

This is Putative defensin-like protein 53 from Arabidopsis thaliana (Mouse-ear cress).